The chain runs to 217 residues: 3,4-dihydroxy-2-butanone 4-phosphate synthase (217 aa).

D-ribulose 5-phosphate is bound by residues 37 to 38 (RE), Asp42, 150 to 154 (RRGHT), and Glu174. Glu38 is a Mg(2+) binding site. His153 lines the Mg(2+) pocket.

The protein belongs to the DHBP synthase family. In terms of assembly, homodimer. Mg(2+) is required as a cofactor. The cofactor is Mn(2+).

The catalysed reaction is D-ribulose 5-phosphate = (2S)-2-hydroxy-3-oxobutyl phosphate + formate + H(+). It participates in cofactor biosynthesis; riboflavin biosynthesis; 2-hydroxy-3-oxobutyl phosphate from D-ribulose 5-phosphate: step 1/1. Its function is as follows. Catalyzes the conversion of D-ribulose 5-phosphate to formate and 3,4-dihydroxy-2-butanone 4-phosphate. The polypeptide is 3,4-dihydroxy-2-butanone 4-phosphate synthase (Shewanella woodyi (strain ATCC 51908 / MS32)).